Reading from the N-terminus, the 291-residue chain is Formamidopyrimidine-DNA glycosylase (291 aa).

The active-site Schiff-base intermediate with DNA is Pro2. The active-site Proton donor is Glu3. Lys58 functions as the Proton donor; for beta-elimination activity in the catalytic mechanism. Residues His104, Arg123, and Lys166 each contribute to the DNA site. The segment at 257-291 adopts an FPG-type zinc-finger fold; it reads KVYDREGKPCPTCGGTVQRFVQNGRSTFWCPKCQK. The active-site Proton donor; for delta-elimination activity is the Arg281.

This sequence belongs to the FPG family. Monomer. Zn(2+) is required as a cofactor.

The enzyme catalyses Hydrolysis of DNA containing ring-opened 7-methylguanine residues, releasing 2,6-diamino-4-hydroxy-5-(N-methyl)formamidopyrimidine.. It catalyses the reaction 2'-deoxyribonucleotide-(2'-deoxyribose 5'-phosphate)-2'-deoxyribonucleotide-DNA = a 3'-end 2'-deoxyribonucleotide-(2,3-dehydro-2,3-deoxyribose 5'-phosphate)-DNA + a 5'-end 5'-phospho-2'-deoxyribonucleoside-DNA + H(+). Its function is as follows. Involved in base excision repair of DNA damaged by oxidation or by mutagenic agents. Acts as a DNA glycosylase that recognizes and removes damaged bases. Has a preference for oxidized purines, such as 7,8-dihydro-8-oxoguanine (8-oxoG). Has AP (apurinic/apyrimidinic) lyase activity and introduces nicks in the DNA strand. Cleaves the DNA backbone by beta-delta elimination to generate a single-strand break at the site of the removed base with both 3'- and 5'-phosphates. This is Formamidopyrimidine-DNA glycosylase from Rhodopseudomonas palustris (strain TIE-1).